Consider the following 149-residue polypeptide: UPF0179 protein Mbar_A0292 (149 aa).

It belongs to the UPF0179 family.

The polypeptide is UPF0179 protein Mbar_A0292 (Methanosarcina barkeri (strain Fusaro / DSM 804)).